Consider the following 157-residue polypeptide: MKPLKGCPVAKDVRVAIVGSCFNSPIADRLVAGAQETFFDFGGDPSSLTIVRVPGAFEIPCAIKKLLSTSGQFHAVVACGVLIQGETSHYEHIADSVAAGVSRLSLDFCLPITFSVITAPNMEAAWERAGIKGPNLGASGMKTALEMASLFSLIGKE.

Residues Phe22, 56-58 (AFE), and 81-83 (VLI) each bind 5-amino-6-(D-ribitylamino)uracil. 86–87 (ET) contributes to the (2S)-2-hydroxy-3-oxobutyl phosphate binding site. His89 (proton donor) is an active-site residue. Phe114 contributes to the 5-amino-6-(D-ribitylamino)uracil binding site. Arg128 contributes to the (2S)-2-hydroxy-3-oxobutyl phosphate binding site.

The protein belongs to the DMRL synthase family.

The catalysed reaction is (2S)-2-hydroxy-3-oxobutyl phosphate + 5-amino-6-(D-ribitylamino)uracil = 6,7-dimethyl-8-(1-D-ribityl)lumazine + phosphate + 2 H2O + H(+). Its pathway is cofactor biosynthesis; riboflavin biosynthesis; riboflavin from 2-hydroxy-3-oxobutyl phosphate and 5-amino-6-(D-ribitylamino)uracil: step 1/2. Functionally, catalyzes the formation of 6,7-dimethyl-8-ribityllumazine by condensation of 5-amino-6-(D-ribitylamino)uracil with 3,4-dihydroxy-2-butanone 4-phosphate. This is the penultimate step in the biosynthesis of riboflavin. In Chlamydia trachomatis serovar L2 (strain ATCC VR-902B / DSM 19102 / 434/Bu), this protein is 6,7-dimethyl-8-ribityllumazine synthase.